The following is a 371-amino-acid chain: Probable cysteine protease RDL5 (371 aa).

The first 23 residues, 1–23 (MGYAKSAMLIFLLALVIASCATA), serve as a signal peptide directing secretion. The propeptide at 24–143 (MDMSVVSSND…NRYKTSDGDV (120 aa)) is activation peptide. Residue Asn94 is glycosylated (N-linked (GlcNAc...) asparagine). Cystine bridges form between Cys165–Cys206, Cys199–Cys239, and Cys298–Cys349. Cys168 is an active-site residue. Residues His304 and Asn324 contribute to the active site.

It belongs to the peptidase C1 family. Expressed in roots, inflorescences and siliques.

Possesses protease activity in vitro. This Arabidopsis thaliana (Mouse-ear cress) protein is Probable cysteine protease RDL5.